We begin with the raw amino-acid sequence, 478 residues long: Aspartyl/glutamyl-tRNA(Asn/Gln) amidotransferase subunit B (478 aa).

Belongs to the GatB/GatE family. GatB subfamily. Heterotrimer of A, B and C subunits.

It catalyses the reaction L-glutamyl-tRNA(Gln) + L-glutamine + ATP + H2O = L-glutaminyl-tRNA(Gln) + L-glutamate + ADP + phosphate + H(+). It carries out the reaction L-aspartyl-tRNA(Asn) + L-glutamine + ATP + H2O = L-asparaginyl-tRNA(Asn) + L-glutamate + ADP + phosphate + 2 H(+). In terms of biological role, allows the formation of correctly charged Asn-tRNA(Asn) or Gln-tRNA(Gln) through the transamidation of misacylated Asp-tRNA(Asn) or Glu-tRNA(Gln) in organisms which lack either or both of asparaginyl-tRNA or glutaminyl-tRNA synthetases. The reaction takes place in the presence of glutamine and ATP through an activated phospho-Asp-tRNA(Asn) or phospho-Glu-tRNA(Gln). The chain is Aspartyl/glutamyl-tRNA(Asn/Gln) amidotransferase subunit B from Pseudothermotoga lettingae (strain ATCC BAA-301 / DSM 14385 / NBRC 107922 / TMO) (Thermotoga lettingae).